The primary structure comprises 282 residues: Complement component 1 Q subcomponent-binding protein, mitochondrial (282 aa).

Residues 1–70 (MLPLLRCVPR…PRGPCACGCG (70 aa)) constitute a mitochondrion transit peptide. Residues 76–93 (TEGDKAFVDFLNDEIKEE) are C1q binding. K91 is subject to N6-acetyllysine. The tract at residues 137-163 (NSIPPTFDGEEEPTQGQKVEEQEPELT) is disordered. An interaction with MAVS region spans residues 168–213 (FVVEVIKNDDGKKALVLDCHYPEDEVGQEDEAESDIFSIREVSFQS). Y188 bears the Phosphotyrosine mark. S201 and S205 each carry phosphoserine.

The protein belongs to the MAM33 family. In terms of assembly, homotrimer; three monomers form a donut-shaped structure with an unusually asymmetric charge distribution on the surface. Interacts with CDK13, HRK, VTN, NFYB, ADRA1B, FOXC1, DDX21, DDX50, NCL, SRSF1 and SRSF9. Interacts with CD93; the association may represent a cell surface C1q receptor. Interacts with KRT1; the association represents a cell surface kininogen receptor. Interacts with CD209; the interaction is indicative for a C1q:C1QBP:CD209 signaling complex. Interacts with FBL and RRP1; the respective interactions with C1QBP are competitive. Probably associates with the mitoribosome. Interacts with MAVS; the interaction occurs upon viral transfection. Interacts with PPIF. Interacts with U2AF1L4. Interacts with PLEKHN1. Interacts with VGF-derived peptide TLQP-21. Interacts with MRE11 and RAD50; forming the MRC (MRE11-RAD50-C1QBP) complex that inhibits the activity of MRE11. (Microbial infection) Interacts with Rubella virus capsid protein; the interaction occurs in mitochondria. As to quaternary structure, (Microbial infection) Interacts with L.monocytogenes InlB.

It localises to the mitochondrion matrix. The protein localises to the nucleus. It is found in the cell membrane. Its subcellular location is the secreted. The protein resides in the cytoplasm. It localises to the nucleolus. Multifunctional and multicompartmental protein involved in inflammation and infection processes, ribosome biogenesis, protein synthesis in mitochondria, regulation of apoptosis, transcriptional regulation and pre-mRNA splicing. At the cell surface is thought to act as an endothelial receptor for plasma proteins of the complement and kallikrein-kinin cascades. Putative receptor for C1q; specifically binds to the globular 'heads' of C1q thus inhibiting C1; may perform the receptor function through a complex with C1qR/CD93. In complex with cytokeratin-1/KRT1 is a high affinity receptor for kininogen-1/HMWK. Can also bind other plasma proteins, such as coagulation factor XII leading to its autoactivation. May function to bind initially fluid kininogen-1 to the cell membrane. The secreted form may enhance both extrinsic and intrinsic coagulation pathways. It is postulated that the cell surface form requires docking with transmembrane proteins for downstream signaling which might be specific for a cell-type or response. By acting as C1q receptor is involved in chemotaxis of immature dendritic cells and neutrophils and is proposed to signal through CD209/DC-SIGN on immature dendritic cells, through integrin alpha-4/beta-1 during trophoblast invasion of the decidua, and through integrin beta-1 during endothelial cell adhesion and spreading. Signaling involved in inhibition of innate immune response is implicating the PI3K-AKT/PKB pathway. Required for protein synthesis in mitochondria. In mitochondrial translation may be involved in formation of functional 55S mitoribosomes; the function seems to involve its RNA-binding activity. Acts as a RNA modification reader, which specifically recognizes and binds mitochondrial RNAs modified by C5-methylcytosine (m5C) in response to stress, and promotes recruitment of the mitochondrial degradosome complex, leading to their degradation. May be involved in the nucleolar ribosome maturation process; the function may involve the exchange of FBL for RRP1 in the association with pre-ribosome particles. Involved in regulation of RNA splicing by inhibiting the RNA-binding capacity of SRSF1 and its phosphorylation. Is required for the nuclear translocation of splicing factor U2AF1L4. Involved in regulation of CDKN2A- and HRK-mediated apoptosis. Stabilizes mitochondrial CDKN2A isoform smARF. May be involved in regulation of FOXC1 transcriptional activity and NFY/CCAAT-binding factor complex-mediated transcription. May play a role in antibacterial defense as it can bind to cell surface hyaluronan and inhibit Streptococcus pneumoniae hyaluronate lyase. May be involved in modulation of the immune response; ligation by HCV core protein is resulting in suppression of interleukin-12 production in monocyte-derived dendritic cells. Involved in regulation of antiviral response by inhibiting RIGI- and IFIH1-mediated signaling pathways probably involving its association with MAVS after viral infection. Acts as a regulator of DNA repair via homologous recombination by inhibiting the activity of MRE11: interacts with unphosphorylated MRE11 and RAD50 in absence of DNA damage, preventing formation and activity of the MRN complex. Following DNA damage, dissociates from phosphorylated MRE11, allowing formation of the MRN complex. In terms of biological role, (Microbial infection) During bacterial infection processes acts as an attachment site for microbial proteins, including Listeria monocytogenes internalin B (InlB). This is Complement component 1 Q subcomponent-binding protein, mitochondrial (C1QBP) from Chlorocebus aethiops (Green monkey).